The chain runs to 772 residues: Delta-like protein A (772 aa).

The signal sequence occupies residues Met-1–Ala-20. Residues Ser-21–Thr-536 lie on the Extracellular side of the membrane. In terms of domain architecture, DSL spans Phe-179–Cys-223. Disulfide bonds link Cys-181/Cys-190, Cys-194/Cys-206, Cys-214/Cys-223, Cys-228/Cys-239, Cys-232/Cys-245, Cys-259/Cys-270, Cys-265/Cys-276, Cys-278/Cys-287, Cys-294/Cys-306, Cys-300/Cys-316, Cys-318/Cys-327, Cys-334/Cys-345, Cys-339/Cys-354, Cys-356/Cys-365, Cys-372/Cys-383, Cys-377/Cys-393, Cys-395/Cys-404, Cys-411/Cys-422, Cys-416/Cys-431, Cys-433/Cys-442, Cys-449/Cys-460, Cys-454/Cys-469, Cys-471/Cys-480, Cys-487/Cys-498, Cys-492/Cys-507, and Cys-509/Cys-518. EGF-like domains follow at residues Glu-225 to Asp-257, Asp-257 to Asn-288, and Asp-290 to Glu-328. One can recognise an EGF-like 4; calcium-binding domain in the interval Glu-330–Glu-366. 4 EGF-like domains span residues Ser-368 to Glu-405, Lys-407 to Asp-443, Ala-445 to Ser-481, and Pro-483 to Gln-519. Asn-479 carries N-linked (GlcNAc...) asparagine glycosylation. Residues Ala-537 to Val-557 form a helical membrane-spanning segment. Topologically, residues Cys-558 to Val-772 are cytoplasmic. A disordered region spans residues Glu-688–Glu-722. Residues Lys-696–Glu-722 are compositionally biased toward basic and acidic residues.

As to quaternary structure, interacts with mib. In terms of processing, ubiquitinated by mib, leading to its endocytosis and subsequent degradation. Ubiquitinated by the ECS(ASB11) complex, leading to its degradation by the proteasome. Expressed in nervous system. In the developing nervous system, it is expressed in overlapping regions with deltaB (dlb) and deltaD (dld); in the neural plate, dla is expressed in patches of contiguous cells with dld, while dlb is confined to scattered cells within those patches that will differentiate as neurons. In 24 hours embryos, expressed in the hindbrain in stripes adjacent to rhombomere boundaries, but not in the actual boundary cells. During gastrulation and tail formation, expressed in embryonic midline cells. Expressed in hair cells of inner ear.

It is found in the membrane. Acts as a ligand for Notch receptors and is involved in primary neurogenesis. Can activate Notch receptors, thereby playing a key role in lateral inhibition, a process that prevents the immediate neighbors of each nascent neural cell from simultaneously embarking on neural differentiation. Required for boundary formation during segmentation of the hindbrain. Required for midline cell fate specification prior to germ layer formation; regulates specification of floorplate, notochord and hypochord. In inner ear, it prevents adjacent cells from adopting the same cell fate. Plays a role in angiogenesis. The protein is Delta-like protein A (dla) of Danio rerio (Zebrafish).